Here is a 989-residue protein sequence, read N- to C-terminus: E3 ubiquitin-protein ligase Arkadia (989 aa).

Residues Lys19, Lys33, Lys46, Lys58, Lys72, Lys86, Lys95, and Lys109 each participate in a glycyl lysine isopeptide (Lys-Gly) (interchain with G-Cter in SUMO2) cross-link. The disordered stretch occupies residues 63 to 195 (FSHLCDDSQK…TEADPVPSLL (133 aa)). Residues 65–88 (HLCDDSQKQEKDMTGNQQEQEKSG) are compositionally biased toward basic and acidic residues. Polar residues predominate over residues 97-109 (QQAGPSYVQNCVK). Over residues 110 to 120 (ENQEILGRRQQ) the composition is skewed to basic and acidic residues. Residues 131–144 (SSLSECLSSPSSSL) are compositionally biased toward low complexity. Lys172 is covalently cross-linked (Glycyl lysine isopeptide (Lys-Gly) (interchain with G-Cter in SUMO2)). A compositionally biased stretch (basic residues) spans 173-183 (SRSHSARSHKW). Glycyl lysine isopeptide (Lys-Gly) (interchain with G-Cter in SUMO2) cross-links involve residues Lys197 and Lys217. The tract at residues 213–293 (KRLVKSSSSQ…PSNPAAPSGS (81 aa)) is disordered. The interval 240–402 (ALAQRKYALL…VPTTSARMDS (163 aa)) is interaction with AXIN1. Low complexity-rich tracts occupy residues 248–270 (LLSS…SSST) and 278–291 (ASAS…AAPS). An SUMO interaction motif 1 (SIM) motif is present at residues 298-302 (VVVIE). An SUMO interaction motif 2 (SIM) motif is present at residues 323-329 (EVEIVTV). The segment at 335-367 (SRSTLGHSRSHWSQGSSSHTGRPQESRNRSRIS) is disordered. Over residues 345-355 (HWSQGSSSHTG) the composition is skewed to low complexity. An SUMO interaction motif 3 (SIM) motif is present at residues 380–384 (VVDLT). Disordered regions lie at residues 388 to 475 (DEPT…MPRL), 506 to 559 (HGHH…YHDQ), and 641 to 675 (MPPP…PPPQ). The segment covering 393-451 (VPTTSARMDSQTTSASINNSNPSTSEQASDTTSTVASSQPSTVSETEATLTSNSATGSS) has biased composition (polar residues). A compositionally biased stretch (basic residues) spans 506–520 (HGHHFQHHHHHHHTP). The segment covering 548–558 (ANSSSGSSYHD) has biased composition (polar residues). The segment at 902–904 (YPH) is ubiquitin binding. Glycyl lysine isopeptide (Lys-Gly) (interchain with G-Cter in SUMO2) cross-links involve residues Lys918 and Lys922. Residues Cys937 and Cys940 each contribute to the Zn(2+) site. The RING-type; atypical zinc finger occupies 937 to 978 (CTICLSILEEGEDVRRLPCMHLFHQVCVDQWLITNKKCPICR). Residues 952 to 956 (RLPCM) are ubiquitin binding. Residues His960 and Cys963 each coordinate Zn(2+).

The protein belongs to the Arkadia family. In terms of assembly, monomer. Interacts with SMAD6, SMAD7, AXIN1, AXIN2 and SKIL isoform SNON. Interacts with (phosphorylated) SMAD2 and SMAD3. Part of a complex containing RNF111, AXIN1 and SMAD7. Interacts (via SIM domains) with SUMO1 and SUMO2. As to expression, ubiquitously expressed.

The protein resides in the nucleus. It is found in the cytoplasm. The protein localises to the PML body. It catalyses the reaction S-ubiquitinyl-[E2 ubiquitin-conjugating enzyme]-L-cysteine + [acceptor protein]-L-lysine = [E2 ubiquitin-conjugating enzyme]-L-cysteine + N(6)-ubiquitinyl-[acceptor protein]-L-lysine.. It participates in protein modification; protein ubiquitination. With respect to regulation, binds free ubiquitin non-covalently via its RING-type zinc finger. Ubiquitin-binding leads to enhance the E3 ubiquitin-protein ligase activity by stabilizing the ubiquitin-conjugating enzyme E2 (donor ubiquitin) in the 'closed' conformation and activating ubiquitin transfer. Functionally, E3 ubiquitin-protein ligase required for mesoderm patterning during embryonic development. Acts as an enhancer of the transcriptional responses of the SMAD2/SMAD3 effectors, which are activated downstream of BMP. Acts by mediating ubiquitination and degradation of SMAD inhibitors such as SMAD7, inducing their proteasomal degradation and thereby enhancing the transcriptional activity of TGF-beta and BMP. In addition to enhance transcription of SMAD2/SMAD3 effectors, also regulates their turnover by mediating their ubiquitination and subsequent degradation, coupling their activation with degradation, thereby ensuring that only effectors 'in use' are degraded. Activates SMAD3/SMAD4-dependent transcription by triggering signal-induced degradation of SNON isoform of SKIL. Associates with UBE2D2 as an E2 enzyme. Specifically binds polysumoylated chains via SUMO interaction motifs (SIMs) and mediates ubiquitination of sumoylated substrates. Catalyzes 'Lys-63'-linked ubiquitination of sumoylated XPC in response to UV irradiation, promoting nucleotide excision repair. Mediates ubiquitination and degradation of sumoylated PML. The regulation of the BMP-SMAD signaling is however independent of sumoylation and is not dependent of SUMO interaction motifs (SIMs). This is E3 ubiquitin-protein ligase Arkadia from Mus musculus (Mouse).